A 212-amino-acid chain; its full sequence is N-(5'-phosphoribosyl)anthranilate isomerase (212 aa).

The protein belongs to the TrpF family.

The enzyme catalyses N-(5-phospho-beta-D-ribosyl)anthranilate = 1-(2-carboxyphenylamino)-1-deoxy-D-ribulose 5-phosphate. Its pathway is amino-acid biosynthesis; L-tryptophan biosynthesis; L-tryptophan from chorismate: step 3/5. The protein is N-(5'-phosphoribosyl)anthranilate isomerase of Microcystis aeruginosa (strain NIES-843 / IAM M-2473).